The primary structure comprises 357 residues: uncharacterized protein (357 aa).

A DNA-binding region (zn(2)-C6 fungal-type) is located at residues Cys-6–Cys-32.

It localises to the nucleus. This is an uncharacterized protein from Schizosaccharomyces pombe (strain 972 / ATCC 24843) (Fission yeast).